The sequence spans 92 residues: Probable Fe(2+)-trafficking protein (92 aa).

It belongs to the Fe(2+)-trafficking protein family.

Its function is as follows. Could be a mediator in iron transactions between iron acquisition and iron-requiring processes, such as synthesis and/or repair of Fe-S clusters in biosynthetic enzymes. The sequence is that of Probable Fe(2+)-trafficking protein from Shewanella piezotolerans (strain WP3 / JCM 13877).